We begin with the raw amino-acid sequence, 318 residues long: Methionyl-tRNA formyltransferase (318 aa).

A (6S)-5,6,7,8-tetrahydrofolate-binding site is contributed by 112–115; sequence SILP.

It belongs to the Fmt family.

The catalysed reaction is L-methionyl-tRNA(fMet) + (6R)-10-formyltetrahydrofolate = N-formyl-L-methionyl-tRNA(fMet) + (6S)-5,6,7,8-tetrahydrofolate + H(+). In terms of biological role, attaches a formyl group to the free amino group of methionyl-tRNA(fMet). The formyl group appears to play a dual role in the initiator identity of N-formylmethionyl-tRNA by promoting its recognition by IF2 and preventing the misappropriation of this tRNA by the elongation apparatus. This Shewanella baltica (strain OS185) protein is Methionyl-tRNA formyltransferase.